A 469-amino-acid chain; its full sequence is Bifunctional protein GlmU (469 aa).

A pyrophosphorylase region spans residues 1–236; it reads MLNIKLNIVI…ISEINGINDC (236 aa). UDP-N-acetyl-alpha-D-glucosamine-binding positions include 11-14, Lys25, Gln83, 88-89, 110-112, Gly147, Glu161, Asn176, and Asn234; these read LAAG, GT, and YGD. Position 112 (Asp112) interacts with Mg(2+). Asn234 contacts Mg(2+). The tract at residues 237 to 257 is linker; it reads AQLANLERLYQKEQAESLLRI. Residues 258 to 469 form an N-acetyltransferase region; that stretch reads GVIIADPNRF…KKKIRYNIIY (212 aa). UDP-N-acetyl-alpha-D-glucosamine-binding residues include Arg340 and Lys358. The active-site Proton acceptor is His370. The UDP-N-acetyl-alpha-D-glucosamine site is built by Tyr373 and Asn384. Acetyl-CoA contacts are provided by residues Ala387, 393–394, Ser412, Ala430, and Arg447; that span reads NY.

It in the N-terminal section; belongs to the N-acetylglucosamine-1-phosphate uridyltransferase family. This sequence in the C-terminal section; belongs to the transferase hexapeptide repeat family. As to quaternary structure, homotrimer. Mg(2+) serves as cofactor.

It localises to the cytoplasm. The catalysed reaction is alpha-D-glucosamine 1-phosphate + acetyl-CoA = N-acetyl-alpha-D-glucosamine 1-phosphate + CoA + H(+). The enzyme catalyses N-acetyl-alpha-D-glucosamine 1-phosphate + UTP + H(+) = UDP-N-acetyl-alpha-D-glucosamine + diphosphate. Its pathway is nucleotide-sugar biosynthesis; UDP-N-acetyl-alpha-D-glucosamine biosynthesis; N-acetyl-alpha-D-glucosamine 1-phosphate from alpha-D-glucosamine 6-phosphate (route II): step 2/2. It functions in the pathway nucleotide-sugar biosynthesis; UDP-N-acetyl-alpha-D-glucosamine biosynthesis; UDP-N-acetyl-alpha-D-glucosamine from N-acetyl-alpha-D-glucosamine 1-phosphate: step 1/1. It participates in bacterial outer membrane biogenesis; LPS lipid A biosynthesis. Functionally, catalyzes the last two sequential reactions in the de novo biosynthetic pathway for UDP-N-acetylglucosamine (UDP-GlcNAc). The C-terminal domain catalyzes the transfer of acetyl group from acetyl coenzyme A to glucosamine-1-phosphate (GlcN-1-P) to produce N-acetylglucosamine-1-phosphate (GlcNAc-1-P), which is converted into UDP-GlcNAc by the transfer of uridine 5-monophosphate (from uridine 5-triphosphate), a reaction catalyzed by the N-terminal domain. This chain is Bifunctional protein GlmU, found in Baumannia cicadellinicola subsp. Homalodisca coagulata.